The primary structure comprises 1025 residues: Exocyst complex component 6 (1025 aa).

Composition is skewed to basic and acidic residues over residues 1–10 and 22–52; these read MSNKKQKEEI and MVRD…ENVK. Disordered stretches follow at residues 1-122, 135-154, and 666-691; these read MSNK…TRHL, LSSQ…DQAK, and QFGD…DENE. Residues 19-68 are a coiled coil; the sequence is LKTMVRDKDKEQKEEKREKKEKKRLEKKEAENVKKEKKKEKKELKKIGKA. The span at 71–93 shows a compositional bias: low complexity; it reads SGSITSDSSTHSGAQEFDSYGND. Polar residues predominate over residues 104-118; it reads SIDSNGLSSSGQPMQ. 2 stretches are compositionally biased toward low complexity: residues 135–147 and 666–677; these read LSSQ…LPHS and QFGDKNLNNNNN. The segment covering 678 to 691 has biased composition (acidic residues); that stretch reads NDDDDDYFDEDENE.

Belongs to the SEC15 family. As to quaternary structure, the exocyst complex is composed of sec3/exoc1, sec5/exoc2, sec6/exoc3, sec8/exoc4, sec10/exoc5, sec15/exoc6, exo70/exoc7 and exo84/exoc8.

It is found in the cytoplasm. The protein localises to the perinuclear region. It localises to the midbody. The protein resides in the midbody ring. Its function is as follows. Component of the exocyst complex involved in the docking of exocytic vesicles with fusion sites on the plasma membrane. In Dictyostelium discoideum (Social amoeba), this protein is Exocyst complex component 6 (exoc6).